Consider the following 83-residue polypeptide: Host transcription reprogramming factor 9 (83 aa).

An N-terminal signal peptide occupies residues 1–19 (MQFSKITLAIVLYALGTAA). The segment at 54 to 77 (YRCDKCEKEFVKGNDFFNHGGRGH) adopts a C2H2-type zinc-finger fold.

Its subcellular location is the secreted. It is found in the host nucleus. Functionally, probable secreted effector that translocates into the nuclei of host cells to reprogram the expression of targeted genes by binding on effector binding elements in rice. The protein is Host transcription reprogramming factor 9 of Pyricularia oryzae (strain 70-15 / ATCC MYA-4617 / FGSC 8958) (Rice blast fungus).